We begin with the raw amino-acid sequence, 327 residues long: ATP-dependent 6-phosphofructokinase (327 aa).

Glycine 12 contacts ATP. ADP is bound by residues arginine 22–arginine 26 and arginine 55–aspartate 60. ATP contacts are provided by residues arginine 73 to phenylalanine 74 and glycine 103 to serine 106. Aspartate 104 contributes to the Mg(2+) binding site. Threonine 127–aspartate 129 lines the substrate pocket. Aspartate 129 (proton acceptor) is an active-site residue. An ADP-binding site is contributed by arginine 156. Substrate contacts are provided by residues arginine 164 and methionine 171–arginine 173. Residues glycine 187–glutamate 189, lysine 213, and lysine 215–histidine 217 contribute to the ADP site. Substrate contacts are provided by residues glutamate 224, arginine 245, and histidine 251–arginine 254.

Belongs to the phosphofructokinase type A (PFKA) family. ATP-dependent PFK group I subfamily. Prokaryotic clade 'B1' sub-subfamily. As to quaternary structure, homotetramer. It depends on Mg(2+) as a cofactor.

It localises to the cytoplasm. The catalysed reaction is beta-D-fructose 6-phosphate + ATP = beta-D-fructose 1,6-bisphosphate + ADP + H(+). It functions in the pathway carbohydrate degradation; glycolysis; D-glyceraldehyde 3-phosphate and glycerone phosphate from D-glucose: step 3/4. Its activity is regulated as follows. Allosterically activated by ADP and other diphosphonucleosides, and allosterically inhibited by phosphoenolpyruvate. Catalyzes the phosphorylation of D-fructose 6-phosphate to fructose 1,6-bisphosphate by ATP, the first committing step of glycolysis. This Hamiltonella defensa subsp. Acyrthosiphon pisum (strain 5AT) protein is ATP-dependent 6-phosphofructokinase.